The sequence spans 148 residues: UPF0134 protein MPN_410 (148 aa).

It belongs to the UPF0134 family.

The protein is UPF0134 protein MPN_410 of Mycoplasma pneumoniae (strain ATCC 29342 / M129 / Subtype 1) (Mycoplasmoides pneumoniae).